The following is a 289-amino-acid chain: uncharacterized protein (289 aa).

Positions 80–96 (PLNESRTSFKNIPQSRN) are enriched in polar residues. 2 disordered regions span residues 80–101 (PLNESRTSFKNIPQSRNLPRDY) and 136–157 (PRENFRNDTDIPKDPLRDRMRE).

This is an uncharacterized protein from Acanthamoeba polyphaga (Amoeba).